The primary structure comprises 166 residues: Large ribosomal subunit protein uL10 (166 aa).

The protein belongs to the universal ribosomal protein uL10 family. As to quaternary structure, part of the ribosomal stalk of the 50S ribosomal subunit. The N-terminus interacts with L11 and the large rRNA to form the base of the stalk. The C-terminus forms an elongated spine to which L12 dimers bind in a sequential fashion forming a multimeric L10(L12)X complex.

Forms part of the ribosomal stalk, playing a central role in the interaction of the ribosome with GTP-bound translation factors. In Neisseria gonorrhoeae (strain ATCC 700825 / FA 1090), this protein is Large ribosomal subunit protein uL10.